A 293-amino-acid chain; its full sequence is Serine/threonine-protein phosphatase 2A catalytic subunit beta isoform (293 aa).

Mn(2+) is bound by residues D41, H43, D69, and N101. The active-site Proton donor is H102. H151 and H225 together coordinate Mn(2+). Y291 is modified (phosphotyrosine). The residue at position 293 (L293) is a Leucine methyl ester.

It belongs to the PPP phosphatase family. PP-1 subfamily. Found in a complex with at least ARL2, PPP2CB, PPP2R1A, PPP2R2A, PPP2R5E and TBCD. Interacts with TBCD. PP2A consists of a common heterodimeric core enzyme (composed of a 36 kDa catalytic subunit (subunit C) and a 65 kDa constant regulatory subunit (PR65) (subunit A)) that associates with a variety of regulatory subunits. Proteins that associate with the core dimer include three families of regulatory subunits B (the R2/B/PR55/B55, R3/B''/PR72/PR130/PR59 and R5/B'/B56 families), the 48 kDa variable regulatory subunit, viral proteins, and cell signaling molecules. Binds PPME1. May indirectly interact with SGO1, most probably through regulatory B56 subunits. Interacts with CTTNBP2NL. Interacts with PTPA. Part of the core of STRIPAK complexes composed of PP2A catalytic and scaffolding subunits, the striatins (PP2A regulatory subunits), the striatin-associated proteins MOB4, STRIP1 and STRIP2, PDCD10 and members of the STE20 kinases, such as STK24 and STK26. It depends on Mn(2+) as a cofactor. In terms of processing, reversibly methyl esterified on Leu-293 by leucine carboxyl methyltransferase 1 (Lcmt1) and protein phosphatase methylesterase 1 (PPME1). Carboxyl methylation influences the affinity of the catalytic subunit for the different regulatory subunits, thereby modulating the PP2A holoenzyme's substrate specificity, enzyme activity and cellular localization. Post-translationally, phosphorylation of either threonine (by autophosphorylation-activated protein kinase) or tyrosine results in inactivation of the phosphatase. Auto-dephosphorylation has been suggested as a mechanism for reactivation. May be monoubiquitinated by NOSIP.

It localises to the cytoplasm. Its subcellular location is the nucleus. It is found in the chromosome. The protein localises to the centromere. The protein resides in the cytoskeleton. It localises to the spindle pole. The catalysed reaction is O-phospho-L-seryl-[protein] + H2O = L-seryl-[protein] + phosphate. It carries out the reaction O-phospho-L-threonyl-[protein] + H2O = L-threonyl-[protein] + phosphate. Catalytic subunit of protein phosphatase 2A (PP2A), a serine/threonine phosphatase involved in the regulation of a wide variety of enzymes, signal transduction pathways, and cellular events. PP2A can modulate the activity of phosphorylase B kinase, casein kinase 2, mitogen-stimulated S6 kinase, and MAP-2 kinase. Part of the striatin-interacting phosphatase and kinase (STRIPAK) complexes. STRIPAK complexes have critical roles in protein (de)phosphorylation and are regulators of multiple signaling pathways including Hippo, MAPK, nuclear receptor and cytoskeleton remodeling. Different types of STRIPAK complexes are involved in a variety of biological processes such as cell growth, differentiation, apoptosis, metabolism and immune regulation. This is Serine/threonine-protein phosphatase 2A catalytic subunit beta isoform (PPP2CB) from Sus scrofa (Pig).